A 415-amino-acid polypeptide reads, in one-letter code: Metal tolerance protein 5 (415 aa).

Topologically, residues 1-124 (MAAAVAGGGE…REKVARSETL (124 aa)) are cytoplasmic. A helical transmembrane segment spans residues 125 to 145 (AIRLSNIANMVLFAAKVYASV). Over 146-150 (RSGSL) the chain is Vacuolar. Residues 151-171 (AIIASTLDSLLDLLSGFILWF) traverse the membrane as a helical segment. At 172-192 (TAFSMQTPNPYRYPIGKKRMQ) the chain is on the cytoplasmic side. The chain crosses the membrane as a helical span at residues 193 to 213 (PLGILVFASVMATLGLQIILE). Over 214 to 232 (SVRSLLSDGDEFSLTKEQE) the chain is Vacuolar. Residues 233–253 (KWVVDIMLAVTLVKLALVLYC) form a helical membrane-spanning segment. Residues 254-268 (RTFTNEIVKAYAQDH) are Cytoplasmic-facing. A helical transmembrane segment spans residues 269-291 (FFDVITNMIGLVAALLATYIEGW). At 292 to 293 (ID) the chain is on the vacuolar side. A helical transmembrane segment spans residues 294–313 (PVGAIILAIYTIRTWSMTVL). Residues 314-415 (ENVHSLVGQS…RPEHALSHEK (102 aa)) lie on the Cytoplasmic side of the membrane.

This sequence belongs to the cation diffusion facilitator (CDF) transporter (TC 2.A.4) family. SLC30A subfamily.

It is found in the vacuole membrane. Functionally, involved in sequestration of excess metal in the cytoplasm into vacuoles to maintain metal homeostasis. The sequence is that of Metal tolerance protein 5 (MTP5) from Oryza sativa subsp. japonica (Rice).